Consider the following 271-residue polypeptide: tRNA (guanine-N(7)-)-methyltransferase (271 aa).

S-adenosyl-L-methionine-binding residues include E95, E120, D147, and D175. Residue D175 is part of the active site. Residues K179, D211, and 249–252 contribute to the substrate site; that span reads THFE.

It belongs to the class I-like SAM-binding methyltransferase superfamily. TrmB family.

The enzyme catalyses guanosine(46) in tRNA + S-adenosyl-L-methionine = N(7)-methylguanosine(46) in tRNA + S-adenosyl-L-homocysteine. The protein operates within tRNA modification; N(7)-methylguanine-tRNA biosynthesis. Functionally, catalyzes the formation of N(7)-methylguanine at position 46 (m7G46) in tRNA. This chain is tRNA (guanine-N(7)-)-methyltransferase, found in Rhodopirellula baltica (strain DSM 10527 / NCIMB 13988 / SH1).